A 570-amino-acid polypeptide reads, in one-letter code: Proline--tRNA ligase (570 aa).

Belongs to the class-II aminoacyl-tRNA synthetase family. ProS type 1 subfamily. As to quaternary structure, homodimer.

Its subcellular location is the cytoplasm. The enzyme catalyses tRNA(Pro) + L-proline + ATP = L-prolyl-tRNA(Pro) + AMP + diphosphate. Functionally, catalyzes the attachment of proline to tRNA(Pro) in a two-step reaction: proline is first activated by ATP to form Pro-AMP and then transferred to the acceptor end of tRNA(Pro). As ProRS can inadvertently accommodate and process non-cognate amino acids such as alanine and cysteine, to avoid such errors it has two additional distinct editing activities against alanine. One activity is designated as 'pretransfer' editing and involves the tRNA(Pro)-independent hydrolysis of activated Ala-AMP. The other activity is designated 'posttransfer' editing and involves deacylation of mischarged Ala-tRNA(Pro). The misacylated Cys-tRNA(Pro) is not edited by ProRS. This chain is Proline--tRNA ligase, found in Clostridium tetani (strain Massachusetts / E88).